The following is a 568-amino-acid chain: Proline--tRNA ligase (568 aa).

This sequence belongs to the class-II aminoacyl-tRNA synthetase family. ProS type 1 subfamily. Homodimer.

It localises to the cytoplasm. The catalysed reaction is tRNA(Pro) + L-proline + ATP = L-prolyl-tRNA(Pro) + AMP + diphosphate. Its function is as follows. Catalyzes the attachment of proline to tRNA(Pro) in a two-step reaction: proline is first activated by ATP to form Pro-AMP and then transferred to the acceptor end of tRNA(Pro). As ProRS can inadvertently accommodate and process non-cognate amino acids such as alanine and cysteine, to avoid such errors it has two additional distinct editing activities against alanine. One activity is designated as 'pretransfer' editing and involves the tRNA(Pro)-independent hydrolysis of activated Ala-AMP. The other activity is designated 'posttransfer' editing and involves deacylation of mischarged Ala-tRNA(Pro). The misacylated Cys-tRNA(Pro) is not edited by ProRS. The chain is Proline--tRNA ligase from Alkalilimnicola ehrlichii (strain ATCC BAA-1101 / DSM 17681 / MLHE-1).